The primary structure comprises 357 residues: Peptide chain release factor 1 (357 aa).

Position 232 is an N5-methylglutamine (Q232). Over residues 281 to 305 (DRQHNEMAADRRSQVGSGDRSERIR) the composition is skewed to basic and acidic residues. The segment at 281–309 (DRQHNEMAADRRSQVGSGDRSERIRTYNF) is disordered.

It belongs to the prokaryotic/mitochondrial release factor family. Methylated by PrmC. Methylation increases the termination efficiency of RF1.

Its subcellular location is the cytoplasm. Its function is as follows. Peptide chain release factor 1 directs the termination of translation in response to the peptide chain termination codons UAG and UAA. This is Peptide chain release factor 1 from Nitratidesulfovibrio vulgaris (strain DSM 19637 / Miyazaki F) (Desulfovibrio vulgaris).